The following is a 431-amino-acid chain: Glutamyl-tRNA(Gln) amidotransferase subunit A (431 aa).

Residues lysine 37 and serine 112 each act as charge relay system in the active site. The Acyl-ester intermediate role is filled by serine 136.

It belongs to the amidase family. GatA subfamily. As to quaternary structure, heterotrimer of A, B and C subunits.

It catalyses the reaction L-glutamyl-tRNA(Gln) + L-glutamine + ATP + H2O = L-glutaminyl-tRNA(Gln) + L-glutamate + ADP + phosphate + H(+). Its function is as follows. Allows the formation of correctly charged Gln-tRNA(Gln) through the transamidation of misacylated Glu-tRNA(Gln) in organisms which lack glutaminyl-tRNA synthetase. The reaction takes place in the presence of glutamine and ATP through an activated gamma-phospho-Glu-tRNA(Gln). This chain is Glutamyl-tRNA(Gln) amidotransferase subunit A, found in Methanospirillum hungatei JF-1 (strain ATCC 27890 / DSM 864 / NBRC 100397 / JF-1).